The primary structure comprises 541 residues: Chaperonin GroEL 5 (541 aa).

Residues 30 to 33, Gly415, and Asp496 each bind ATP; that span reads TLGP.

It belongs to the chaperonin (HSP60) family. Forms a cylinder of 14 subunits composed of two heptameric rings stacked back-to-back. Interacts with the co-chaperonin GroES.

It localises to the cytoplasm. It carries out the reaction ATP + H2O + a folded polypeptide = ADP + phosphate + an unfolded polypeptide.. Functionally, together with its co-chaperonin GroES, plays an essential role in assisting protein folding. The GroEL-GroES system forms a nano-cage that allows encapsulation of the non-native substrate proteins and provides a physical environment optimized to promote and accelerate protein folding. The polypeptide is Chaperonin GroEL 5 (Bradyrhizobium diazoefficiens (strain JCM 10833 / BCRC 13528 / IAM 13628 / NBRC 14792 / USDA 110)).